Reading from the N-terminus, the 207-residue chain is Glutathione S-transferase P (207 aa).

One can recognise a GST N-terminal domain in the interval 1 to 78 (PPYTITYFPV…HLGRSFGLYG (78 aa)). At tyrosine 3 the chain carries Phosphotyrosine; by EGFR. Residues tyrosine 7, arginine 13, tryptophan 38, lysine 42, and 49–50 (QL) each bind glutathione. Threonine 59 bears the Phosphothreonine mark. 62–63 (QS) is a glutathione binding site. The 122-residue stretch at 80-201 (DQKEAALVDM…ASPEHVNRPI (122 aa)) folds into the GST C-terminal domain. 2 positions are modified to N6-succinyllysine: lysine 100 and lysine 113. An N6-acetyllysine modification is found at lysine 125.

Belongs to the GST superfamily. Pi family. Homodimer. Interacts with CDK5.

It is found in the cytoplasm. The protein resides in the mitochondrion. It localises to the nucleus. The catalysed reaction is RX + glutathione = an S-substituted glutathione + a halide anion + H(+). It carries out the reaction prostaglandin J2 + glutathione = prostaglandin J2-S-(R)-glutathione. It catalyses the reaction prostaglandin J2 + glutathione = prostaglandin J2-S-(S)-glutathione. The enzyme catalyses prostaglandin A2 + glutathione = prostaglandin A2-S-(S)-glutathione. The catalysed reaction is 11(S)-hydroxy-14(S),15(S)-epoxy-(5Z,8Z,12E)-eicosatrienoate + glutathione = (11S,15S)-dihydroxy-14(R)-S-glutathionyl-(5Z,8Z,12E)-eicosatrienoate. Functionally, conjugation of reduced glutathione to a wide number of exogenous and endogenous hydrophobic electrophiles. Involved in the formation of glutathione conjugates of both prostaglandin A2 (PGA2) and prostaglandin J2 (PGJ2). Participates in the formation of novel hepoxilin regioisomers. Negatively regulates CDK5 activity via p25/p35 translocation to prevent neurodegeneration. The protein is Glutathione S-transferase P (GSTP1) of Sus scrofa (Pig).